An 81-amino-acid polypeptide reads, in one-letter code: RNA-binding protein Hfq (81 aa).

The Sm domain occupies 10 to 69 (DPFLNTLRREHVPVSIYLVNGIKLQGQIESFDQYVVLLRNTVTQMVYKHAISTIVPGRAV).

The protein belongs to the Hfq family. In terms of assembly, homohexamer.

RNA chaperone that binds small regulatory RNA (sRNAs) and mRNAs to facilitate mRNA translational regulation in response to envelope stress, environmental stress and changes in metabolite concentrations. Also binds with high specificity to tRNAs. The sequence is that of RNA-binding protein Hfq from Variovorax paradoxus (strain S110).